A 334-amino-acid polypeptide reads, in one-letter code: Ornithine carbamoyltransferase (334 aa).

Carbamoyl phosphate-binding positions include 57–60 (STRT), Gln-84, Arg-108, and 135–138 (HPTQ). L-ornithine-binding positions include Asn-169, Asp-233, and 237-238 (SM). Carbamoyl phosphate is bound by residues 275–276 (CL) and Arg-320.

The protein belongs to the aspartate/ornithine carbamoyltransferase superfamily. OTCase family.

It localises to the cytoplasm. The catalysed reaction is carbamoyl phosphate + L-ornithine = L-citrulline + phosphate + H(+). Its pathway is amino-acid biosynthesis; L-arginine biosynthesis; L-arginine from L-ornithine and carbamoyl phosphate: step 1/3. Reversibly catalyzes the transfer of the carbamoyl group from carbamoyl phosphate (CP) to the N(epsilon) atom of ornithine (ORN) to produce L-citrulline. This Aeromonas hydrophila subsp. hydrophila (strain ATCC 7966 / DSM 30187 / BCRC 13018 / CCUG 14551 / JCM 1027 / KCTC 2358 / NCIMB 9240 / NCTC 8049) protein is Ornithine carbamoyltransferase.